The following is a 334-amino-acid chain: Ribosomal RNA large subunit methyltransferase F (334 aa).

Residues 1–25 form a disordered region; sequence MPRPSSPRPDAERKSASPLHPRNRH.

Belongs to the methyltransferase superfamily. METTL16/RlmF family.

Its subcellular location is the cytoplasm. The enzyme catalyses adenosine(1618) in 23S rRNA + S-adenosyl-L-methionine = N(6)-methyladenosine(1618) in 23S rRNA + S-adenosyl-L-homocysteine + H(+). Functionally, specifically methylates the adenine in position 1618 of 23S rRNA. This is Ribosomal RNA large subunit methyltransferase F from Pseudomonas paraeruginosa (strain DSM 24068 / PA7) (Pseudomonas aeruginosa (strain PA7)).